The sequence spans 69 residues: Large ribosomal subunit protein bL31 (69 aa).

Zn(2+) contacts are provided by Cys-16, Cys-18, Cys-37, and Cys-40.

This sequence belongs to the bacterial ribosomal protein bL31 family. Type A subfamily. In terms of assembly, part of the 50S ribosomal subunit. It depends on Zn(2+) as a cofactor.

In terms of biological role, binds the 23S rRNA. The polypeptide is Large ribosomal subunit protein bL31 (Teredinibacter turnerae (strain ATCC 39867 / T7901)).